The chain runs to 174 residues: Co-chaperone protein HscB homolog (174 aa).

The 73-residue stretch at 2–74 folds into the J domain; it reads NYFELFNLPV…IRRAEHMLAL (73 aa).

It belongs to the HscB family. Interacts with HscA and stimulates its ATPase activity.

Its function is as follows. Co-chaperone involved in the maturation of iron-sulfur cluster-containing proteins. Seems to help targeting proteins to be folded toward HscA. This chain is Co-chaperone protein HscB homolog, found in Shewanella amazonensis (strain ATCC BAA-1098 / SB2B).